Here is a 67-residue protein sequence, read N- to C-terminus: Protein AaeX (67 aa).

Helical transmembrane passes span 3 to 23 and 43 to 63; these read LFPV…ELLL and FVWH…YLIS.

The protein belongs to the AaeX family.

It localises to the cell membrane. This Escherichia coli (strain K12 / DH10B) protein is Protein AaeX.